The primary structure comprises 290 residues: GTPase Era (290 aa).

Positions 2-169 constitute an Era-type G domain; it reads KSGFVSIIGR…KDKIYENLQE (168 aa). Residues 10–17 form a G1 region; the sequence is GRPSTGKS. 10 to 17 contacts GTP; the sequence is GRPSTGKS. The tract at residues 36–40 is G2; the sequence is QTTRN. The interval 57-60 is G3; that stretch reads DTPG. GTP contacts are provided by residues 57–61 and 119–122; these read DTPGF and NKID. The segment at 119–122 is G4; sequence NKID. The interval 148–150 is G5; that stretch reads ISA. One can recognise a KH type-2 domain in the interval 200 to 276; it reads LKEELPYSLY…DLFLQVKLRK (77 aa).

This sequence belongs to the TRAFAC class TrmE-Era-EngA-EngB-Septin-like GTPase superfamily. Era GTPase family. In terms of assembly, monomer.

Its subcellular location is the cytoplasm. It is found in the cell inner membrane. An essential GTPase that binds both GDP and GTP, with rapid nucleotide exchange. Plays a role in 16S rRNA processing and 30S ribosomal subunit biogenesis and possibly also in cell cycle regulation and energy metabolism. The polypeptide is GTPase Era (Borrelia turicatae (strain 91E135)).